The sequence spans 261 residues: DNA repair protein RecO (261 aa).

Belongs to the RecO family.

Functionally, involved in DNA repair and RecF pathway recombination. The sequence is that of DNA repair protein RecO from Mycobacteroides abscessus (strain ATCC 19977 / DSM 44196 / CCUG 20993 / CIP 104536 / JCM 13569 / NCTC 13031 / TMC 1543 / L948) (Mycobacterium abscessus).